Consider the following 337-residue polypeptide: GTPase Obg (337 aa).

The region spanning M1–L158 is the Obg domain. Composition is skewed to basic and acidic residues over residues N61–G74 and P137–G146. 2 disordered regions span residues N61–R83 and G119–G146. The OBG-type G domain occupies A159 to L330. Residues G165–S172, F190–E194, D212–G215, T282–D285, and S311–A313 each bind GTP. 2 residues coordinate Mg(2+): S172 and T192.

The protein belongs to the TRAFAC class OBG-HflX-like GTPase superfamily. OBG GTPase family. Monomer. The cofactor is Mg(2+).

The protein resides in the cytoplasm. An essential GTPase which binds GTP, GDP and possibly (p)ppGpp with moderate affinity, with high nucleotide exchange rates and a fairly low GTP hydrolysis rate. Plays a role in control of the cell cycle, stress response, ribosome biogenesis and in those bacteria that undergo differentiation, in morphogenesis control. The chain is GTPase Obg from Solibacter usitatus (strain Ellin6076).